A 565-amino-acid chain; its full sequence is Proline--tRNA ligase (565 aa).

Belongs to the class-II aminoacyl-tRNA synthetase family. ProS type 1 subfamily. Homodimer.

The protein localises to the cytoplasm. The enzyme catalyses tRNA(Pro) + L-proline + ATP = L-prolyl-tRNA(Pro) + AMP + diphosphate. Catalyzes the attachment of proline to tRNA(Pro) in a two-step reaction: proline is first activated by ATP to form Pro-AMP and then transferred to the acceptor end of tRNA(Pro). As ProRS can inadvertently accommodate and process non-cognate amino acids such as alanine and cysteine, to avoid such errors it has two additional distinct editing activities against alanine. One activity is designated as 'pretransfer' editing and involves the tRNA(Pro)-independent hydrolysis of activated Ala-AMP. The other activity is designated 'posttransfer' editing and involves deacylation of mischarged Ala-tRNA(Pro). The misacylated Cys-tRNA(Pro) is not edited by ProRS. This Hydrogenobaculum sp. (strain Y04AAS1) protein is Proline--tRNA ligase.